Reading from the N-terminus, the 587-residue chain is Solute carrier family 13 member 2 (587 aa).

Helical transmembrane passes span 13–33, 53–73, 86–106, and 136–156; these read FYLI…IVQT, ALPL…MGIM, TNIL…WNLH, and SMWI…HAVL. Positions 188 to 208 are disordered; sequence KLDNGQPVSAPSEPRTQKTQE. 8 helical membrane passes run 264–284, 329–349, 367–387, 407–427, 445–465, 477–497, 506–526, and 535–555; these read FAFP…QVLF, VLFV…FPGW, TVAI…PGLM, TVND…FALA, PLQH…IAIF, LFLP…LYVM, LAFM…FGGL, and GFLL…SWSI.

Belongs to the SLC13A/DASS transporter (TC 2.A.47) family. NADC subfamily. As to expression, expressed in large and small intestine and in the kidney proximal tubules.

It localises to the apical cell membrane. The enzyme catalyses succinate(out) + 3 Na(+)(out) = succinate(in) + 3 Na(+)(in). It carries out the reaction fumarate(out) + 3 Na(+)(out) = fumarate(in) + 3 Na(+)(in). The catalysed reaction is 2-oxoglutarate(out) + 3 Na(+)(out) = 2-oxoglutarate(in) + 3 Na(+)(in). Li(+) decreases succinate transport in the presence of Na(+), by competing at one of the three cation binding sites. Functionally, low-affinity sodium-dicarboxylate cotransporter, that mediates the entry of citric acid cycle intermediates, such as succinate, citrate, fumarate and alpha-ketoglutarate (2-oxoglutarate) into the small intestine and renal proximal tubule. Transports the dicarboxylate into the cell with a probable stoichiometry of 3 Na(+) for 1 divalent dicarboxylate, rendering the process electrogenic. Citrate is transported in protonated form as a divalent anion, rather than the trivalent form which is normally found in blood. Has a critical role in renal dicarboxylate transport. This is Solute carrier family 13 member 2 (Slc13a2) from Rattus norvegicus (Rat).